Consider the following 334-residue polypeptide: MKKNQFLKESDVTAESVFFMKRRQVLKALGISATALSLPHAAHADLLSWFKGNDRPPAPAGKALEFSKPAAWQNNLPLTPADKVSGYNNFYEFGLDKADPAANAGSLKTDPWTLKISGEVAKPLTLDHDDLTRRFPLEERIYRMRCVEAWSMVVPWIGFPLHKLLALAEPTSNAKYVAFETIYAPEQMPGQQDRFIGGGLKYPYVEGLRLDEAMHPLTLMTVGVYGKALPPQNGAPVRLIVPWKYGFKGIKSIVSIKLTRERPPTTWNLAAPDEYGFYANVNPYVDHPRWSQATERFIGSGGILDVQRQPTLLFNGYADQVASLYRGLDLRENF.

A signal peptide (tat-type signal) is located at residues 1-44 (MKKNQFLKESDVTAESVFFMKRRQVLKALGISATALSLPHAAHA). Mo-molybdopterin-binding positions include Asn88, 91 to 92 (YE), Cys146, Thr181, Asn233, Arg238, and 249 to 251 (GIK).

It belongs to the MsrP family. Heterodimer of a catalytic subunit (MsrP) and a heme-binding subunit (MsrQ). Requires Mo-molybdopterin as cofactor. In terms of processing, predicted to be exported by the Tat system. The position of the signal peptide cleavage has not been experimentally proven.

The protein resides in the periplasm. The enzyme catalyses L-methionyl-[protein] + a quinone + H2O = L-methionyl-(S)-S-oxide-[protein] + a quinol. It catalyses the reaction L-methionyl-[protein] + a quinone + H2O = L-methionyl-(R)-S-oxide-[protein] + a quinol. Part of the MsrPQ system that repairs oxidized periplasmic proteins containing methionine sulfoxide residues (Met-O), using respiratory chain electrons. Thus protects these proteins from oxidative-stress damage caused by reactive species of oxygen and chlorine generated by the host defense mechanisms. MsrPQ is essential for the maintenance of envelope integrity under bleach stress, rescuing a wide series of structurally unrelated periplasmic proteins from methionine oxidation, including the primary periplasmic chaperone SurA and the lipoprotein Pal. The catalytic subunit MsrP is non-stereospecific, being able to reduce both (R-) and (S-) diastereoisomers of methionine sulfoxide. This chain is Protein-methionine-sulfoxide reductase catalytic subunit MsrP, found in Escherichia coli (strain K12 / MC4100 / BW2952).